The primary structure comprises 88 residues: UPF0223 protein RBAM_014500 (88 aa).

This sequence belongs to the UPF0223 family.

The sequence is that of UPF0223 protein RBAM_014500 from Bacillus velezensis (strain DSM 23117 / BGSC 10A6 / LMG 26770 / FZB42) (Bacillus amyloliquefaciens subsp. plantarum).